Here is a 347-residue protein sequence, read N- to C-terminus: NADH-ubiquinone oxidoreductase chain 2 (347 aa).

The next 11 membrane-spanning stretches (helical) occupy residues 3–23 (PLIL…VMMS), 25–45 (HWLM…PLLM), 59–79 (YFLT…INLM), 96–116 (IIMT…FWVP), 122–142 (ISLT…LSIL), 148–168 (VINP…GGWG), 178–198 (ILAY…AFNP), 202–222 (LLNL…FMVA), 240–260 (ITTS…LAGF), 276–296 (IILA…YIRL), and 326–346 (LPPL…MILL).

Belongs to the complex I subunit 2 family. As to quaternary structure, core subunit of respiratory chain NADH dehydrogenase (Complex I) which is composed of 45 different subunits. Interacts with TMEM242.

The protein localises to the mitochondrion inner membrane. The enzyme catalyses a ubiquinone + NADH + 5 H(+)(in) = a ubiquinol + NAD(+) + 4 H(+)(out). In terms of biological role, core subunit of the mitochondrial membrane respiratory chain NADH dehydrogenase (Complex I) which catalyzes electron transfer from NADH through the respiratory chain, using ubiquinone as an electron acceptor. Essential for the catalytic activity and assembly of complex I. The protein is NADH-ubiquinone oxidoreductase chain 2 of Peropteryx kappleri (Greater dog-like bat).